Consider the following 425-residue polypeptide: Elongation factor 1-alpha (425 aa).

In terms of domain architecture, tr-type G spans 5 to 221 (KPHMNLAVIG…DLFKMPDMPT (217 aa)). The segment at 14–21 (GHIDHGKS) is G1. 14 to 21 (GHIDHGKS) serves as a coordination point for GTP. A Mg(2+)-binding site is contributed by S21. The segment at 70–74 (GITID) is G2. The tract at residues 91-94 (DCPG) is G3. GTP-binding positions include 91–95 (DCPGH) and 146–149 (NKMD). Positions 146–149 (NKMD) are G4. The interval 185–187 (SAF) is G5.

Belongs to the TRAFAC class translation factor GTPase superfamily. Classic translation factor GTPase family. EF-Tu/EF-1A subfamily.

It is found in the cytoplasm. It carries out the reaction GTP + H2O = GDP + phosphate + H(+). GTP hydrolase that promotes the GTP-dependent binding of aminoacyl-tRNA to the A-site of ribosomes during protein biosynthesis. The polypeptide is Elongation factor 1-alpha (Methanocorpusculum labreanum (strain ATCC 43576 / DSM 4855 / Z)).